Here is a 333-residue protein sequence, read N- to C-terminus: Homeobox protein Nkx-3.2 (333 aa).

2 disordered regions span residues Pro74 to Val121 and Asp137 to Ala212. The span at Asp137–Ser148 shows a compositional bias: basic and acidic residues. Residues Gly179–Gly191 are compositionally biased toward gly residues. The segment at residues Lys206–Gln265 is a DNA-binding region (homeobox).

The protein belongs to the NK-3 homeobox family. In terms of tissue distribution, expressed widely in mesoderm at the gastroduodenal junction (at protein level). Expressed in visceral mesoderm and embryonic skeleton. Expression is restricted to immature proliferative chondrocytes during endochondral ossification.

The protein resides in the nucleus. Transcriptional repressor that acts as a negative regulator of chondrocyte maturation. PLays a role in distal stomach development; required for proper antral-pyloric morphogenesis and development of antral-type epithelium. In concert with GSC, defines the structural components of the middle ear; required for tympanic ring and gonium development and in the regulation of the width of the malleus. The chain is Homeobox protein Nkx-3.2 (Nkx3-2) from Mus musculus (Mouse).